We begin with the raw amino-acid sequence, 132 residues long: Small ribosomal subunit protein uS8 (132 aa).

This sequence belongs to the universal ribosomal protein uS8 family. As to quaternary structure, part of the 30S ribosomal subunit. Contacts proteins S5 and S12.

Its function is as follows. One of the primary rRNA binding proteins, it binds directly to 16S rRNA central domain where it helps coordinate assembly of the platform of the 30S subunit. The protein is Small ribosomal subunit protein uS8 of Pediococcus pentosaceus (strain ATCC 25745 / CCUG 21536 / LMG 10740 / 183-1w).